The sequence spans 198 residues: Ribosome maturation factor RimM (198 aa).

The tract at residues 1–21 (MPPPTASTPDDSADPGPDFAD) is disordered. The 74-residue stretch at 122–195 (DDELFADDLV…RIVVRPIDGL (74 aa)) folds into the PRC barrel domain.

The protein belongs to the RimM family. As to quaternary structure, binds ribosomal protein uS19.

It localises to the cytoplasm. Functionally, an accessory protein needed during the final step in the assembly of 30S ribosomal subunit, possibly for assembly of the head region. Essential for efficient processing of 16S rRNA. May be needed both before and after RbfA during the maturation of 16S rRNA. It has affinity for free ribosomal 30S subunits but not for 70S ribosomes. The polypeptide is Ribosome maturation factor RimM (Salinibacter ruber (strain DSM 13855 / M31)).